The sequence spans 142 residues: MVLSAADKTNVKGVFSKIGGHAEEYGAETLERMFTAYPQTKTYFPHFDLQHGSAQIKAHGKKVAAALVEAVNHIDDIAGALSKLSDLHAQKLRVDPVNFKFLGHCFLVVVAIHHPSALTPEVHASLDKFLCAVGTVLTAKYR.

Positions 2-142 constitute a Globin domain; sequence VLSAADKTNV…VGTVLTAKYR (141 aa). His59 lines the O2 pocket. His88 is a heme b binding site.

This sequence belongs to the globin family. As to quaternary structure, heterotetramer of two alpha chains and two beta chains. Red blood cells.

Its function is as follows. Involved in oxygen transport from the lung to the various peripheral tissues. The protein is Hemoglobin subunit alpha-A (HBAA) of Anser anser anser (Western greylag goose).